The following is a 492-amino-acid chain: Probable cytosol aminopeptidase (492 aa).

2 residues coordinate Mn(2+): Lys259 and Asp264. Residue Lys271 is part of the active site. Mn(2+) contacts are provided by Asp283, Asp342, and Glu344. The active site involves Arg346.

It belongs to the peptidase M17 family. The cofactor is Mn(2+).

The protein localises to the cytoplasm. The enzyme catalyses Release of an N-terminal amino acid, Xaa-|-Yaa-, in which Xaa is preferably Leu, but may be other amino acids including Pro although not Arg or Lys, and Yaa may be Pro. Amino acid amides and methyl esters are also readily hydrolyzed, but rates on arylamides are exceedingly low.. It carries out the reaction Release of an N-terminal amino acid, preferentially leucine, but not glutamic or aspartic acids.. Functionally, presumably involved in the processing and regular turnover of intracellular proteins. Catalyzes the removal of unsubstituted N-terminal amino acids from various peptides. This is Probable cytosol aminopeptidase (pepA) from Synechocystis sp. (strain ATCC 27184 / PCC 6803 / Kazusa).